The primary structure comprises 443 residues: Probable glycine dehydrogenase (decarboxylating) subunit 1 (443 aa).

It belongs to the GcvP family. N-terminal subunit subfamily. The glycine cleavage system is composed of four proteins: P, T, L and H. In this organism, the P 'protein' is a heterodimer of two subunits.

It catalyses the reaction N(6)-[(R)-lipoyl]-L-lysyl-[glycine-cleavage complex H protein] + glycine + H(+) = N(6)-[(R)-S(8)-aminomethyldihydrolipoyl]-L-lysyl-[glycine-cleavage complex H protein] + CO2. Functionally, the glycine cleavage system catalyzes the degradation of glycine. The P protein binds the alpha-amino group of glycine through its pyridoxal phosphate cofactor; CO(2) is released and the remaining methylamine moiety is then transferred to the lipoamide cofactor of the H protein. The chain is Probable glycine dehydrogenase (decarboxylating) subunit 1 from Nitratidesulfovibrio vulgaris (strain DP4) (Desulfovibrio vulgaris).